The following is a 184-amino-acid chain: ATP synthase subunit b, chloroplastic (184 aa).

Residues 26-48 (ILATNLINLSVVLGVLIFFGKGV) traverse the membrane as a helical segment.

The protein belongs to the ATPase B chain family. F-type ATPases have 2 components, F(1) - the catalytic core - and F(0) - the membrane proton channel. F(1) has five subunits: alpha(3), beta(3), gamma(1), delta(1), epsilon(1). F(0) has four main subunits: a(1), b(1), b'(1) and c(10-14). The alpha and beta chains form an alternating ring which encloses part of the gamma chain. F(1) is attached to F(0) by a central stalk formed by the gamma and epsilon chains, while a peripheral stalk is formed by the delta, b and b' chains.

It is found in the plastid. The protein localises to the chloroplast thylakoid membrane. Its function is as follows. F(1)F(0) ATP synthase produces ATP from ADP in the presence of a proton or sodium gradient. F-type ATPases consist of two structural domains, F(1) containing the extramembraneous catalytic core and F(0) containing the membrane proton channel, linked together by a central stalk and a peripheral stalk. During catalysis, ATP synthesis in the catalytic domain of F(1) is coupled via a rotary mechanism of the central stalk subunits to proton translocation. In terms of biological role, component of the F(0) channel, it forms part of the peripheral stalk, linking F(1) to F(0). This chain is ATP synthase subunit b, chloroplastic, found in Acorus calamus (Sweet flag).